A 371-amino-acid chain; its full sequence is Polygalacturonase (371 aa).

The first 19 residues, 1–19 (MPSYLRNLVWATLAAGLVS), serve as a signal peptide directing secretion. The propeptide occupies 20–34 (AAPTPSRVSDLTKKS). Cys-38 and Cys-53 are joined by a disulfide. 7 PbH1 repeats span residues 95-117 (GPLI…VINA), 165-195 (SDNL…DISE), 196-217 (STGV…AINS), 218-238 (GQNI…SIGS), 247-268 (VKNV…RIKT), 276-298 (VSDV…VIEQ), and 310-355 (TSGV…DITS). Asp-210 acts as the Proton donor in catalysis. A disulfide bond links Cys-212 and Cys-228. His-232 is an active-site residue. Residue Asn-249 is glycosylated (N-linked (GlcNAc...) asparagine). Cystine bridges form between Cys-338–Cys-343 and Cys-362–Cys-371.

The protein belongs to the glycosyl hydrolase 28 family.

Its subcellular location is the secreted. It carries out the reaction (1,4-alpha-D-galacturonosyl)n+m + H2O = (1,4-alpha-D-galacturonosyl)n + (1,4-alpha-D-galacturonosyl)m.. The sequence is that of Polygalacturonase from Penicillium janthinellum (Penicillium vitale).